We begin with the raw amino-acid sequence, 260 residues long: Ribosomal RNA small subunit methyltransferase J (260 aa).

Residues 125–126 and Asp179 contribute to the S-adenosyl-L-methionine site; that span reads ER.

It belongs to the methyltransferase superfamily. RsmJ family.

The protein resides in the cytoplasm. The enzyme catalyses guanosine(1516) in 16S rRNA + S-adenosyl-L-methionine = N(2)-methylguanosine(1516) in 16S rRNA + S-adenosyl-L-homocysteine + H(+). Its function is as follows. Specifically methylates the guanosine in position 1516 of 16S rRNA. The sequence is that of Ribosomal RNA small subunit methyltransferase J from Pseudomonas fluorescens (strain ATCC BAA-477 / NRRL B-23932 / Pf-5).